A 382-amino-acid polypeptide reads, in one-letter code: DNA replication and repair protein RecF (382 aa).

Residue 30–37 (GPNGHGKS) participates in ATP binding.

This sequence belongs to the RecF family.

It localises to the cytoplasm. Functionally, the RecF protein is involved in DNA metabolism; it is required for DNA replication and normal SOS inducibility. RecF binds preferentially to single-stranded, linear DNA. It also seems to bind ATP. This Magnetococcus marinus (strain ATCC BAA-1437 / JCM 17883 / MC-1) protein is DNA replication and repair protein RecF.